A 406-amino-acid polypeptide reads, in one-letter code: Arginine biosynthesis bifunctional protein ArgJ (406 aa).

Substrate-binding residues include Thr156, Lys182, Thr193, Glu279, Asn401, and Thr406. Catalysis depends on Thr193, which acts as the Nucleophile.

This sequence belongs to the ArgJ family. Heterotetramer of two alpha and two beta chains.

Its subcellular location is the cytoplasm. The enzyme catalyses N(2)-acetyl-L-ornithine + L-glutamate = N-acetyl-L-glutamate + L-ornithine. It carries out the reaction L-glutamate + acetyl-CoA = N-acetyl-L-glutamate + CoA + H(+). Its pathway is amino-acid biosynthesis; L-arginine biosynthesis; L-ornithine and N-acetyl-L-glutamate from L-glutamate and N(2)-acetyl-L-ornithine (cyclic): step 1/1. It participates in amino-acid biosynthesis; L-arginine biosynthesis; N(2)-acetyl-L-ornithine from L-glutamate: step 1/4. Its function is as follows. Catalyzes two activities which are involved in the cyclic version of arginine biosynthesis: the synthesis of N-acetylglutamate from glutamate and acetyl-CoA as the acetyl donor, and of ornithine by transacetylation between N(2)-acetylornithine and glutamate. This chain is Arginine biosynthesis bifunctional protein ArgJ, found in Bacillus licheniformis (strain ATCC 14580 / DSM 13 / JCM 2505 / CCUG 7422 / NBRC 12200 / NCIMB 9375 / NCTC 10341 / NRRL NRS-1264 / Gibson 46).